A 208-amino-acid polypeptide reads, in one-letter code: NAD(P)H-quinone oxidoreductase subunit I (208 aa).

4Fe-4S ferredoxin-type domains are found at residues 55 to 84 (GRIH…VDWV) and 95 to 124 (RNYS…MTEE). [4Fe-4S] cluster contacts are provided by C64, C67, C70, C74, C104, C107, C110, and C114.

It belongs to the complex I 23 kDa subunit family. As to quaternary structure, NDH-1 is composed of at least 11 different subunits. The cofactor is [4Fe-4S] cluster.

The protein resides in the cellular thylakoid membrane. The enzyme catalyses a plastoquinone + NADH + (n+1) H(+)(in) = a plastoquinol + NAD(+) + n H(+)(out). It carries out the reaction a plastoquinone + NADPH + (n+1) H(+)(in) = a plastoquinol + NADP(+) + n H(+)(out). Its function is as follows. NDH-1 shuttles electrons from an unknown electron donor, via FMN and iron-sulfur (Fe-S) centers, to quinones in the respiratory and/or the photosynthetic chain. The immediate electron acceptor for the enzyme in this species is believed to be plastoquinone. Couples the redox reaction to proton translocation, and thus conserves the redox energy in a proton gradient. The protein is NAD(P)H-quinone oxidoreductase subunit I of Prochlorococcus marinus subsp. pastoris (strain CCMP1986 / NIES-2087 / MED4).